We begin with the raw amino-acid sequence, 187 residues long: uncharacterized protein (187 aa).

Residues 1 to 95 form a disordered region; sequence MTTMKRSADP…GSTRPSARYG (95 aa). Over residues 46–80 the composition is skewed to basic residues; that stretch reads RARRSRGPKRFLGKRNYRRARARKPGKRDRAHSSK.

It localises to the mitochondrion. This is an uncharacterized protein from Arabidopsis thaliana (Mouse-ear cress).